Reading from the N-terminus, the 336-residue chain is Glyceraldehyde-3-phosphate dehydrogenase 1 (336 aa).

Residues 13–14 and Asp35 each bind NAD(+); that span reads RI. Ser59 is subject to Phosphoserine. An NAD(+)-binding site is contributed by Arg80. Residue Ser125 is modified to Phosphoserine. Residues 151-153, Thr182, 211-212, and Arg234 contribute to the D-glyceraldehyde 3-phosphate site; these read SCT and TG. The Nucleophile role is filled by Cys152. Residue Asn316 coordinates NAD(+).

Belongs to the glyceraldehyde-3-phosphate dehydrogenase family. In terms of assembly, homotetramer.

It localises to the cytoplasm. The catalysed reaction is D-glyceraldehyde 3-phosphate + phosphate + NAD(+) = (2R)-3-phospho-glyceroyl phosphate + NADH + H(+). It functions in the pathway carbohydrate degradation; glycolysis; pyruvate from D-glyceraldehyde 3-phosphate: step 1/5. The protein is Glyceraldehyde-3-phosphate dehydrogenase 1 (tdh1) of Schizosaccharomyces pombe (strain 972 / ATCC 24843) (Fission yeast).